The chain runs to 114 residues: DNA-binding protein rrnAC3180 (114 aa).

Positions 1–11 are enriched in acidic residues; it reads MSGDPSEEELE. The tract at residues 1–45 is disordered; it reads MSGDPSEEELEELRKKKMEQLKEQQGGEGEGQEAAQQQAEAQKQA. Residues 12-22 are compositionally biased toward basic and acidic residues; sequence ELRKKKMEQLK. A compositionally biased stretch (low complexity) spans 32 to 45; that stretch reads QEAAQQQAEAQKQA.

Belongs to the PDCD5 family.

In Haloarcula marismortui (strain ATCC 43049 / DSM 3752 / JCM 8966 / VKM B-1809) (Halobacterium marismortui), this protein is DNA-binding protein rrnAC3180.